The primary structure comprises 493 residues: Mitochondrial distribution and morphology protein 10 (493 aa).

Belongs to the MDM10 family. Component of the ER-mitochondria encounter structure (ERMES) or MDM complex, composed of MMM1, MDM10, MDM12 and MDM34. Associates with the mitochondrial outer membrane sorting assembly machinery SAM(core) complex, which consists of SAM35, SAM37 and SAM50, to form a SAM(holo) complex.

The protein localises to the mitochondrion outer membrane. In terms of biological role, component of the ERMES/MDM complex, which serves as a molecular tether to connect the endoplasmic reticulum and mitochondria. Components of this complex are involved in the control of mitochondrial shape and protein biogenesis and may function in phospholipid exchange. MDM10 is involved in the late assembly steps of the general translocase of the mitochondrial outer membrane (TOM complex). Functions in the TOM40-specific route of the assembly of outer membrane beta-barrel proteins, including the association of TOM40 with the receptor TOM22 and small TOM proteins. Can associate with the SAM(core) complex as well as the MDM12-MMM1 complex, both involved in late steps of the major beta-barrel assembly pathway, that is responsible for biogenesis of all outer membrane beta-barrel proteins. May act as a switch that shuttles between both complexes and channels precursor proteins into the TOM40-specific pathway. Plays a role in mitochondrial morphology and in the inheritance of mitochondria. The protein is Mitochondrial distribution and morphology protein 10 of Saccharomyces cerevisiae (strain RM11-1a) (Baker's yeast).